A 571-amino-acid polypeptide reads, in one-letter code: Plastidial pyruvate kinase 3, chloroplastic (571 aa).

A chloroplast-targeting transit peptide spans 1 to 55 (MAAYGQISSGMTVDPQVLSSSRNIGVSLSPLRRTLIGAGVRSTSISLRQCSLSVR). Residue Arg129 coordinates substrate. K(+) contacts are provided by Asn131, Ser133, Asp164, and Thr165. 131 to 134 (NMSH) lines the ATP pocket. Arg171 is a binding site for ATP. Lys314 serves as a coordination point for substrate. A Mg(2+)-binding site is contributed by Glu316. Positions 339, 340, and 372 each coordinate substrate. Asp340 is a Mg(2+) binding site.

Belongs to the pyruvate kinase family. As to quaternary structure, oligomer of alpha and beta subunits. Requires Mg(2+) as cofactor. The cofactor is K(+). Expressed at low levels in roots, leaves, inflorescences, siliques, pollen, seeds and flowers.

Its subcellular location is the plastid. It is found in the chloroplast stroma. The enzyme catalyses pyruvate + ATP = phosphoenolpyruvate + ADP + H(+). It participates in carbohydrate degradation; glycolysis; pyruvate from D-glyceraldehyde 3-phosphate: step 5/5. Required for plastidial pyruvate kinase activity. This Arabidopsis thaliana (Mouse-ear cress) protein is Plastidial pyruvate kinase 3, chloroplastic (PKP3).